A 295-amino-acid polypeptide reads, in one-letter code: GTP cyclohydrolase FolE2 (295 aa).

Belongs to the GTP cyclohydrolase IV family.

It carries out the reaction GTP + H2O = 7,8-dihydroneopterin 3'-triphosphate + formate + H(+). It functions in the pathway cofactor biosynthesis; 7,8-dihydroneopterin triphosphate biosynthesis; 7,8-dihydroneopterin triphosphate from GTP: step 1/1. Converts GTP to 7,8-dihydroneopterin triphosphate. In Pseudomonas putida (strain W619), this protein is GTP cyclohydrolase FolE2.